The chain runs to 87 residues: Cobalt transport protein CbiN (87 aa).

A run of 2 helical transmembrane segments spans residues 4-24 (LLLL…EWAG) and 58-78 (MLFS…LGYY).

It belongs to the CbiN family. As to quaternary structure, forms an energy-coupling factor (ECF) transporter complex composed of an ATP-binding protein (A component, CbiO), a transmembrane protein (T component, CbiQ) and 2 possible substrate-capture proteins (S components, CbiM and CbiN) of unknown stoichimetry.

Its subcellular location is the cell membrane. Its pathway is cofactor biosynthesis; adenosylcobalamin biosynthesis. In terms of biological role, part of the energy-coupling factor (ECF) transporter complex CbiMNOQ involved in cobalt import. This Archaeoglobus fulgidus (strain ATCC 49558 / DSM 4304 / JCM 9628 / NBRC 100126 / VC-16) protein is Cobalt transport protein CbiN.